Reading from the N-terminus, the 367-residue chain is Alanine racemase (367 aa).

Lys-40 functions as the Proton acceptor; specific for D-alanine in the catalytic mechanism. The residue at position 40 (Lys-40) is an N6-(pyridoxal phosphate)lysine. A substrate-binding site is contributed by Arg-136. Tyr-263 (proton acceptor; specific for L-alanine) is an active-site residue. Substrate is bound at residue Met-310.

The protein belongs to the alanine racemase family. Requires pyridoxal 5'-phosphate as cofactor.

It carries out the reaction L-alanine = D-alanine. It functions in the pathway amino-acid biosynthesis; D-alanine biosynthesis; D-alanine from L-alanine: step 1/1. In terms of biological role, catalyzes the interconversion of L-alanine and D-alanine. May also act on other amino acids. In Lactococcus lactis subsp. lactis (strain IL1403) (Streptococcus lactis), this protein is Alanine racemase (alr).